Reading from the N-terminus, the 94-residue chain is DNA-directed RNA polymerase subunit Rpo11 (94 aa).

The protein belongs to the archaeal Rpo11/eukaryotic RPB11/RPC19 RNA polymerase subunit family. Part of the RNA polymerase complex.

Its subcellular location is the cytoplasm. The enzyme catalyses RNA(n) + a ribonucleoside 5'-triphosphate = RNA(n+1) + diphosphate. In terms of biological role, DNA-dependent RNA polymerase (RNAP) catalyzes the transcription of DNA into RNA using the four ribonucleoside triphosphates as substrates. The sequence is that of DNA-directed RNA polymerase subunit Rpo11 from Haloarcula marismortui (strain ATCC 43049 / DSM 3752 / JCM 8966 / VKM B-1809) (Halobacterium marismortui).